The sequence spans 266 residues: Hydroxyethylthiazole kinase (266 aa).

Methionine 45 provides a ligand contact to substrate. Residues lysine 121 and serine 167 each contribute to the ATP site. Glycine 194 lines the substrate pocket.

This sequence belongs to the Thz kinase family. Mg(2+) serves as cofactor.

It carries out the reaction 5-(2-hydroxyethyl)-4-methylthiazole + ATP = 4-methyl-5-(2-phosphooxyethyl)-thiazole + ADP + H(+). The protein operates within cofactor biosynthesis; thiamine diphosphate biosynthesis; 4-methyl-5-(2-phosphoethyl)-thiazole from 5-(2-hydroxyethyl)-4-methylthiazole: step 1/1. Functionally, catalyzes the phosphorylation of the hydroxyl group of 4-methyl-5-beta-hydroxyethylthiazole (THZ). The polypeptide is Hydroxyethylthiazole kinase (Methanocella arvoryzae (strain DSM 22066 / NBRC 105507 / MRE50)).